A 276-amino-acid chain; its full sequence is Formamidopyrimidine-DNA glycosylase (276 aa).

The active-site Schiff-base intermediate with DNA is proline 2. Glutamate 3 (proton donor) is an active-site residue. The active-site Proton donor; for beta-elimination activity is the lysine 58. The DNA site is built by histidine 92, arginine 111, and lysine 154. The FPG-type zinc-finger motif lies at 239 to 273 (QVYGHAGEECSSCGTILEKIKVNGRGTTFCPHCQV). Arginine 263 (proton donor; for delta-elimination activity) is an active-site residue.

The protein belongs to the FPG family. As to quaternary structure, monomer. Requires Zn(2+) as cofactor.

It carries out the reaction Hydrolysis of DNA containing ring-opened 7-methylguanine residues, releasing 2,6-diamino-4-hydroxy-5-(N-methyl)formamidopyrimidine.. The catalysed reaction is 2'-deoxyribonucleotide-(2'-deoxyribose 5'-phosphate)-2'-deoxyribonucleotide-DNA = a 3'-end 2'-deoxyribonucleotide-(2,3-dehydro-2,3-deoxyribose 5'-phosphate)-DNA + a 5'-end 5'-phospho-2'-deoxyribonucleoside-DNA + H(+). Its function is as follows. Involved in base excision repair of DNA damaged by oxidation or by mutagenic agents. Acts as a DNA glycosylase that recognizes and removes damaged bases. Has a preference for oxidized purines, such as 7,8-dihydro-8-oxoguanine (8-oxoG). Has AP (apurinic/apyrimidinic) lyase activity and introduces nicks in the DNA strand. Cleaves the DNA backbone by beta-delta elimination to generate a single-strand break at the site of the removed base with both 3'- and 5'-phosphates. The chain is Formamidopyrimidine-DNA glycosylase from Lactobacillus gasseri (strain ATCC 33323 / DSM 20243 / BCRC 14619 / CIP 102991 / JCM 1131 / KCTC 3163 / NCIMB 11718 / NCTC 13722 / AM63).